Reading from the N-terminus, the 264-residue chain is 3-methyl-2-oxobutanoate hydroxymethyltransferase (264 aa).

Residues Asp45 and Asp84 each coordinate Mg(2+). Residues 45 to 46 (DS), Asp84, and Lys112 contribute to the 3-methyl-2-oxobutanoate site. Glu114 lines the Mg(2+) pocket. The Proton acceptor role is filled by Glu181.

This sequence belongs to the PanB family. Homodecamer; pentamer of dimers. The cofactor is Mg(2+).

The protein resides in the cytoplasm. It carries out the reaction 3-methyl-2-oxobutanoate + (6R)-5,10-methylene-5,6,7,8-tetrahydrofolate + H2O = 2-dehydropantoate + (6S)-5,6,7,8-tetrahydrofolate. It functions in the pathway cofactor biosynthesis; (R)-pantothenate biosynthesis; (R)-pantoate from 3-methyl-2-oxobutanoate: step 1/2. Catalyzes the reversible reaction in which hydroxymethyl group from 5,10-methylenetetrahydrofolate is transferred onto alpha-ketoisovalerate to form ketopantoate. The protein is 3-methyl-2-oxobutanoate hydroxymethyltransferase of Shigella boydii serotype 18 (strain CDC 3083-94 / BS512).